A 147-amino-acid chain; its full sequence is Large ribosomal subunit protein uL13 (147 aa).

The protein belongs to the universal ribosomal protein uL13 family. In terms of assembly, part of the 50S ribosomal subunit.

Its function is as follows. This protein is one of the early assembly proteins of the 50S ribosomal subunit, although it is not seen to bind rRNA by itself. It is important during the early stages of 50S assembly. The polypeptide is Large ribosomal subunit protein uL13 (Paenarthrobacter aurescens (strain TC1)).